A 101-amino-acid polypeptide reads, in one-letter code: NAD(P)H-quinone oxidoreductase subunit 4L, chloroplastic (101 aa).

Helical transmembrane passes span tyrosine 2–leucine 22, methionine 32–isoleucine 52, and valine 61–valine 81.

This sequence belongs to the complex I subunit 4L family. As to quaternary structure, NDH is composed of at least 16 different subunits, 5 of which are encoded in the nucleus.

It is found in the plastid. Its subcellular location is the chloroplast thylakoid membrane. It carries out the reaction a plastoquinone + NADH + (n+1) H(+)(in) = a plastoquinol + NAD(+) + n H(+)(out). The enzyme catalyses a plastoquinone + NADPH + (n+1) H(+)(in) = a plastoquinol + NADP(+) + n H(+)(out). NDH shuttles electrons from NAD(P)H:plastoquinone, via FMN and iron-sulfur (Fe-S) centers, to quinones in the photosynthetic chain and possibly in a chloroplast respiratory chain. The immediate electron acceptor for the enzyme in this species is believed to be plastoquinone. Couples the redox reaction to proton translocation, and thus conserves the redox energy in a proton gradient. The sequence is that of NAD(P)H-quinone oxidoreductase subunit 4L, chloroplastic from Mesostigma viride (Green alga).